Reading from the N-terminus, the 427-residue chain is Glutamate-1-semialdehyde 2,1-aminomutase (427 aa).

Position 263 is an N6-(pyridoxal phosphate)lysine (lysine 263).

This sequence belongs to the class-III pyridoxal-phosphate-dependent aminotransferase family. HemL subfamily. Homodimer. Pyridoxal 5'-phosphate is required as a cofactor.

Its subcellular location is the cytoplasm. The catalysed reaction is (S)-4-amino-5-oxopentanoate = 5-aminolevulinate. The protein operates within porphyrin-containing compound metabolism; protoporphyrin-IX biosynthesis; 5-aminolevulinate from L-glutamyl-tRNA(Glu): step 2/2. The polypeptide is Glutamate-1-semialdehyde 2,1-aminomutase (Caldicellulosiruptor saccharolyticus (strain ATCC 43494 / DSM 8903 / Tp8T 6331)).